Reading from the N-terminus, the 1338-residue chain is MWQFIRSRILTVIIFIGAAHGLLVVGPKFIRANQEYTLVISNFNSQLSKVDLLLKLEGETDNGLSVLNVTKMVDVRRNMNRMINFNMPEDLTAGNYKITIDGQRGFSFHKEAELVYLSKSISGLIQVDKPVFKPGDTVNFRVIVLDTELKPPARVKSVHVTIRDPQRNVIRKWSTAKLYAGVFESDLQIAPTPMLGVWNISVEVEGEELVSKTFEVKEYVLSTFDVQVMPSVIPLEEHQAVNLTIEANYHFGKPVQGVAKVELYLDDDKLNQKKELTVYGKGQVELRFDNFAMDADQQDVRVKVSFIEQYTNRTVVKQSQITVYRYAYRVELIKESPQFRPGLPFKCALQFTHHDGTPAKGITGKVEVSDVGFETTKTSDNDGLIKLELQPSEGSEQLGINFNAVDGFFFYEDVNKVETVTDAYIKLELKSPIKRNKLMRFMVTCTERMTFFVYYVMSKGNIIDAGFMRPNKQTKYLLQLNATEKMIPKAKILIATVAGRTVVYDYADLDFQELRNNFDLSIDEQEIKPGRQIELSMSGRPGAYVGLAAYDKALLLFNKNHDLFWEDIGQVFDGFHAINENEFDIFHSLGLFARTLDDILFDSANEKTGRNALQSGKPIGKLVSYRTNFQESWLWKNVSIGRSGSRKLIEVVPDTTTSWYLTGFSIDPVYGLGIIKKPIQFTTVQPFYIVENLPYSIKRGEAVVLQFTLFNNLGAEYIADVTLYNVANQTEFVGRPDTDLSYTKSVSVPPKVGVPISFLIKARKLGEMAVRVKASIMLGHETDALEKVIRVMPESLAQPKMDTSFFCFDDYKNQTFPFNLDINKKADNGSKKIEFRLNPNLLTMVIKNLDNLLAVPTGCGEQNMVKFVPNILVLDYLYATGSKEQHLIDKATNLLRQGYQNQMRYRQTDGSFGVWEKSGSSVFLTAFVATSMQTASKYMNDIDAAMVEKALDWLASKQHSSGRFDETGKVWHKDMQGGLRNGVALTSYVLTALLENDIAKVKHAVVIQNGMNYLSNQLAFINNAYDLSIATYAMMLNGHTMKKEALDKLIDMSISDNNKKERYWGTTNQIETTAYALLSFVMAEKYLDGIPIMNWLVNQRYVTGSFPRTQDTFVGLKALTKLAEKISPSRNDYTVQLKYKKSTKYFNINSEQIDFQNFLEIPEDTKKLEINVGGIGFGLLEVIYQFDLNLVNFEHRFKLDLEKQNTGSDYELRLRVCANYIPELTDSQSNMALIEVTLPSGYVVDRNPISEQTTVNPIQNMEIRYGGTSVVLYYYNMGTERNCFTVTAYRRFKVALKRPAYVVVYDYYNTNLNAIKVYEVDKQNVCEICEEEDCPAEC.

Residues 1–21 (MWQFIRSRILTVIIFIGAAHG) form the signal peptide. Residues Asn-68, Asn-199, Asn-242, Asn-312, and Asn-481 are each glycosylated (N-linked (GlcNAc...) asparagine). The interval 580–609 (ENEFDIFHSLGLFARTLDDILFDSANEKTG) is may contain the cleavage site. 4 N-linked (GlcNAc...) asparagine glycosylation sites follow: Asn-637, Asn-728, Asn-813, and Asn-828. A cross-link (isoglutamyl cysteine thioester (Cys-Gln)) is located at residues 859–862 (CGEQ). 3 disulfide bridges follow: Cys-1217-Cys-1283, Cys-1326-Cys-1338, and Cys-1329-Cys-1334.

As to quaternary structure, heterodimer of a TEP1-N chain and an TEP1-C chain non-covalently linked. Forms a complex composed of TEP1-N and TEP1-C heterodimer, LRIM1 and APL1C; the interaction stabilizes TEP1-N and TEP1-C heterodimer, prevents its binding to tissues while circulating in the hemolymph and protects the thioester bond from hydrolysis. Mature TEP1 and to a lesser extent full-length TEP1 interact with SPCLIP1; the interaction is induced by microbial infection. In terms of processing, in the hemolymph, the full-length protein is cleaved by an unknow protease into a 75kDa N-terminal (TEP1-N) chain and an 80kDa C-terminal (TEP1-C) chain which remain non-covalently linked. The TEP1-C chain contains the thioester bond which covalently binds to the pathogen surface. Cleavage is induced by bacterial infection or aseptic wound injury. During embryonic and pupal development, the cleaved form is the predominant form. N-glycosylated.

It is found in the secreted. Plays an essential role in the innate immune response against bacteria, fungi and protozoa infection. After proteolytic cleavage, the protein C-terminus binds covalently through a thioester bond to the pathogen surface resulting in pathogen clearance either by melanization or lysis. Initiate the recruitment and activation of a cascade of proteases, mostly of CLIP-domain serine proteases, which leads to the proteolytic cleavage of the prophenoloxidase (PPO) into active phenoloxidase (PO), the rate-limiting enzyme in melanin biosynthesis. In response to parasite P.berghei-mediated infection, binds to and mediates killing of ookinetes, as they egress from midgut epithelial cells into the basal labyrinth, by both lysis and melanization. During bacterial infection, binds to both Gram-positive and Gram-negative bacteria but only promotes phagocytosis of Gram-negative bacteria. Promotes the accumulation of SPCLIP1 onto the surface of P.berghei ookinetes and bacterium E.coli which leads to the melanization of the pathogen. Recruits CLIPA2 to bacteria surface. In response to bacterial infection, required for periostial hemocyte aggregation, but not for the aggregation of sessile hemocytes in non-periostial regions. During the late stage of fungus B.bassiana-mediated infection, required for the initiation of hyphae melanization by binding to the surface of hyphae and recruiting prophenoloxidase PPO to them. Plays a role in male fertility by binding to defective sperm cells and promoting their removal during spermatogenesis. Its function is as follows. Binds to and mediates killing of parasite P.bergei ookinetes by lysis. Functionally, binds covalently through a thioester bond to the pathogen surface resulting in pathogen clearance. The sequence is that of Thioester-containing protein 1 allele S3 from Anopheles gambiae (African malaria mosquito).